The sequence spans 413 residues: Multifunctional CCA protein (413 aa).

ATP contacts are provided by Gly-8 and Arg-11. CTP-binding residues include Gly-8 and Arg-11. Residues Asp-21 and Asp-23 each contribute to the Mg(2+) site. Positions 91, 143, and 146 each coordinate ATP. CTP is bound by residues Arg-91, Arg-143, and Arg-146. An HD domain is found at 232-333; the sequence is TGVHVMMVVD…VRFFERSDAL (102 aa).

This sequence belongs to the tRNA nucleotidyltransferase/poly(A) polymerase family. Bacterial CCA-adding enzyme type 1 subfamily. As to quaternary structure, monomer. Can also form homodimers and oligomers. Mg(2+) is required as a cofactor. It depends on Ni(2+) as a cofactor.

The enzyme catalyses a tRNA precursor + 2 CTP + ATP = a tRNA with a 3' CCA end + 3 diphosphate. The catalysed reaction is a tRNA with a 3' CCA end + 2 CTP + ATP = a tRNA with a 3' CCACCA end + 3 diphosphate. Catalyzes the addition and repair of the essential 3'-terminal CCA sequence in tRNAs without using a nucleic acid template. Adds these three nucleotides in the order of C, C, and A to the tRNA nucleotide-73, using CTP and ATP as substrates and producing inorganic pyrophosphate. tRNA 3'-terminal CCA addition is required both for tRNA processing and repair. Also involved in tRNA surveillance by mediating tandem CCA addition to generate a CCACCA at the 3' terminus of unstable tRNAs. While stable tRNAs receive only 3'-terminal CCA, unstable tRNAs are marked with CCACCA and rapidly degraded. In Burkholderia ambifaria (strain ATCC BAA-244 / DSM 16087 / CCUG 44356 / LMG 19182 / AMMD) (Burkholderia cepacia (strain AMMD)), this protein is Multifunctional CCA protein.